Here is a 74-residue protein sequence, read N- to C-terminus: UPF0154 protein LSL_0542 (74 aa).

Residues 5–25 traverse the membrane as a helical segment; the sequence is IWVLIVIIAAVLGFVGGFFAA.

It belongs to the UPF0154 family.

The protein resides in the cell membrane. This chain is UPF0154 protein LSL_0542, found in Ligilactobacillus salivarius (strain UCC118) (Lactobacillus salivarius).